A 784-amino-acid polypeptide reads, in one-letter code: Endonuclease MutS2 (784 aa).

G335–T342 provides a ligand contact to ATP. The tract at residues E527–E546 is disordered. Positions L709–K784 constitute a Smr domain.

The protein belongs to the DNA mismatch repair MutS family. MutS2 subfamily. As to quaternary structure, homodimer. Binds to stalled ribosomes, contacting rRNA.

Functionally, endonuclease that is involved in the suppression of homologous recombination and thus may have a key role in the control of bacterial genetic diversity. In terms of biological role, acts as a ribosome collision sensor, splitting the ribosome into its 2 subunits. Detects stalled/collided 70S ribosomes which it binds and splits by an ATP-hydrolysis driven conformational change. Acts upstream of the ribosome quality control system (RQC), a ribosome-associated complex that mediates the extraction of incompletely synthesized nascent chains from stalled ribosomes and their subsequent degradation. Probably generates substrates for RQC. The protein is Endonuclease MutS2 of Geobacillus thermodenitrificans (strain NG80-2).